Reading from the N-terminus, the 321-residue chain is D-alanine--D-alanine ligase (321 aa).

In terms of domain architecture, ATP-grasp spans 121–315 (RIWFLTNNIN…FTNLIEEIIK (195 aa)). Position 147–199 (147–199 (PMKRPYVIKPLTQGSSIGVEVIFAEDDFNFADYDFPYGDQVIIEQYIKGRELQ)) interacts with ATP. Residues Glu268, Glu282, and Asn284 each contribute to the Mg(2+) site.

The protein belongs to the D-alanine--D-alanine ligase family. It depends on Mg(2+) as a cofactor. Mn(2+) is required as a cofactor.

The protein resides in the cytoplasm. It carries out the reaction 2 D-alanine + ATP = D-alanyl-D-alanine + ADP + phosphate + H(+). It participates in cell wall biogenesis; peptidoglycan biosynthesis. Its function is as follows. Cell wall formation. In Rickettsia rickettsii (strain Iowa), this protein is D-alanine--D-alanine ligase.